A 92-amino-acid chain; its full sequence is PqqA binding protein (92 aa).

The protein belongs to the PqqD family. As to quaternary structure, monomer. Interacts with PqqE.

Its pathway is cofactor biosynthesis; pyrroloquinoline quinone biosynthesis. Its function is as follows. Functions as a PqqA binding protein and presents PqqA to PqqE, in the pyrroloquinoline quinone (PQQ) biosynthetic pathway. The protein is PqqA binding protein of Pseudomonas aeruginosa (strain UCBPP-PA14).